Reading from the N-terminus, the 258-residue chain is Calcium release-activated calcium channel protein 1 (258 aa).

Residues 1-63 (MYPECGVETK…SRAKLKASSR (63 aa)) are Cytoplasmic-facing. A helical membrane pass occupies residues 64–81 (TSALLSGFAMVAMVEVQL). At 82 to 91 (EPNHAYPPGL) the chain is on the extracellular side. The chain crosses the membrane as a helical span at residues 92–112 (LIAFSACTTVLVAVHLFALMV). Residues 113-145 (STCILPNIEAVSNVHNLNSVKESPHERMHHHIE) are Cytoplasmic-facing. The helical transmembrane segment at 146 to 166 (LAWAFSTVIGTLLFLAEVVLL) threads the bilayer. Topologically, residues 167–192 (CWVKFLPVNSPKISSNETSAVSSGQA) are extracellular. N-linked (GlcNAc...) asparagine glycosylation is present at Asn182. A helical membrane pass occupies residues 193–213 (AAITSTAIMVPFGLVFIVFAV). The Cytoplasmic segment spans residues 214–258 (HFYRSLVSHKTDRQFQELNELAELAQLQDQLDHRGDPVQSPVHYA).

It belongs to the Orai family.

Its subcellular location is the cell membrane. Functionally, ca(2+) release-activated Ca(2+) (CRAC) channel subunit which mediates Ca(2+) influx following depletion of intracellular Ca(2+) stores. The polypeptide is Calcium release-activated calcium channel protein 1 (orai1) (Xenopus laevis (African clawed frog)).